We begin with the raw amino-acid sequence, 328 residues long: Mitochondrial GTPase 1 (328 aa).

Residues 10–199 enclose the CP-type G domain; it reads KTTLKRLRDS…MVDTPGIMLP (190 aa). GTP-binding positions include 57-60, 143-148, and Gly195; these read NKCD and NVGKSS.

This sequence belongs to the TRAFAC class YlqF/YawG GTPase family. MTG1 subfamily.

Its subcellular location is the mitochondrion inner membrane. Its function is as follows. Mitochondrial GTPase involved in assembly of the large ribosomal subunit. Plays a role in expression of the mitochondrial translational machinery. This Schizosaccharomyces japonicus (strain yFS275 / FY16936) (Fission yeast) protein is Mitochondrial GTPase 1.